Reading from the N-terminus, the 429-residue chain is Tubby-like F-box protein 5 (429 aa).

In terms of domain architecture, F-box spans 53–108 (TRWANLPAALLRDVMKKLDESESTWPARKQVVACAGVCKTWRLMCKDIVKSPEFSG). The disordered stretch occupies residues 360–385 (QPGSGSDGGALATRPSLSPQQPEQSN). Over residues 374-383 (PSLSPQQPEQ) the composition is skewed to polar residues.

The protein belongs to the TUB family. In terms of tissue distribution, mostly expressed in roots, flowers and siliques.

The protein is Tubby-like F-box protein 5 of Arabidopsis thaliana (Mouse-ear cress).